Here is an 876-residue protein sequence, read N- to C-terminus: Alanine--tRNA ligase (876 aa).

Residues H562, H566, C666, and H670 each contribute to the Zn(2+) site.

The protein belongs to the class-II aminoacyl-tRNA synthetase family. Zn(2+) is required as a cofactor.

The protein resides in the cytoplasm. The enzyme catalyses tRNA(Ala) + L-alanine + ATP = L-alanyl-tRNA(Ala) + AMP + diphosphate. Catalyzes the attachment of alanine to tRNA(Ala) in a two-step reaction: alanine is first activated by ATP to form Ala-AMP and then transferred to the acceptor end of tRNA(Ala). Also edits incorrectly charged Ser-tRNA(Ala) and Gly-tRNA(Ala) via its editing domain. The chain is Alanine--tRNA ligase from Hahella chejuensis (strain KCTC 2396).